The chain runs to 126 residues: Glycine cleavage system H protein (126 aa).

In terms of domain architecture, Lipoyl-binding spans 22-103 (KAYIGITDYA…PYGSWMALVE (82 aa)). At lysine 63 the chain carries N6-lipoyllysine.

Belongs to the GcvH family. The glycine cleavage system is composed of four proteins: P, T, L and H. (R)-lipoate serves as cofactor.

In terms of biological role, the glycine cleavage system catalyzes the degradation of glycine. The H protein shuttles the methylamine group of glycine from the P protein to the T protein. The protein is Glycine cleavage system H protein of Thermoanaerobacter sp. (strain X514).